A 353-amino-acid polypeptide reads, in one-letter code: Photosystem II protein D1 (353 aa).

The residue at position 2 (Thr2) is an N-acetylthreonine. Thr2 is subject to Phosphothreonine. A run of 3 helical transmembrane segments spans residues 29–46 (YIGW…TATA), 118–133 (HFLL…EWEL), and 142–156 (WIAV…AAAA). His118 contacts chlorophyll a. Tyr126 lines the pheophytin a pocket. [CaMn4O5] cluster-binding residues include Asp170 and Glu189. The chain crosses the membrane as a helical span at residues 197-218 (FHMLGVAGVFGGSLFSAMHGSL). Residue His198 participates in chlorophyll a binding. Residues His215 and 264–265 (SF) each bind a quinone. Position 215 (His215) interacts with Fe cation. His272 is a Fe cation binding site. The helical transmembrane segment at 274–288 (FLAAWPVVGIWFTAL) threads the bilayer. Positions 332, 333, 342, and 344 each coordinate [CaMn4O5] cluster. The propeptide occupies 345–353 (SVEAPSVNG).

Belongs to the reaction center PufL/M/PsbA/D family. In terms of assembly, PSII is composed of 1 copy each of membrane proteins PsbA, PsbB, PsbC, PsbD, PsbE, PsbF, PsbH, PsbI, PsbJ, PsbK, PsbL, PsbM, PsbT, PsbX, PsbY, PsbZ, Psb30/Ycf12, at least 3 peripheral proteins of the oxygen-evolving complex and a large number of cofactors. It forms dimeric complexes. The cofactor is The D1/D2 heterodimer binds P680, chlorophylls that are the primary electron donor of PSII, and subsequent electron acceptors. It shares a non-heme iron and each subunit binds pheophytin, quinone, additional chlorophylls, carotenoids and lipids. D1 provides most of the ligands for the Mn4-Ca-O5 cluster of the oxygen-evolving complex (OEC). There is also a Cl(-1) ion associated with D1 and D2, which is required for oxygen evolution. The PSII complex binds additional chlorophylls, carotenoids and specific lipids.. In terms of processing, tyr-161 forms a radical intermediate that is referred to as redox-active TyrZ, YZ or Y-Z. Post-translationally, C-terminally processed by CTPA; processing is essential to allow assembly of the oxygen-evolving complex and thus photosynthetic growth.

Its subcellular location is the plastid. The protein localises to the chloroplast thylakoid membrane. It carries out the reaction 2 a plastoquinone + 4 hnu + 2 H2O = 2 a plastoquinol + O2. Its function is as follows. Photosystem II (PSII) is a light-driven water:plastoquinone oxidoreductase that uses light energy to abstract electrons from H(2)O, generating O(2) and a proton gradient subsequently used for ATP formation. It consists of a core antenna complex that captures photons, and an electron transfer chain that converts photonic excitation into a charge separation. The D1/D2 (PsbA/PsbD) reaction center heterodimer binds P680, the primary electron donor of PSII as well as several subsequent electron acceptors. The chain is Photosystem II protein D1 from Huperzia lucidula (Shining clubmoss).